Consider the following 539-residue polypeptide: Cytochrome c oxidase subunit 1 homolog (539 aa).

The next 2 membrane-spanning stretches (helical) occupy residues 28–48 and 75–95; these read LFAAHMWVLFFTLVVSTLLLL and GVMATVFWGVVGFLVGVVVAL. Residue His-117 participates in heme b binding. Transmembrane regions (helical) follow at residues 118–138, 154–174, 187–207, 214–234, 265–285, 298–318, 330–350, 368–388, 402–422, 443–463, and 498–518; these read TSAVIFAFGGNALIATSFYVV, FVFWGYNLFIIMAATGYLLGI, VDLWLTIVWVAYLATFLGTIL, ISVANWFYLSFIVTIAMLHIV, GHNAVGFFLTAGFLGMMYYFI, LSIIHFWALIFMYIWAGPHHL, LGMVFSIMLWMPSWGGMINGL, MMVMAVAFYGMATFEGPMMSI, IGHVHSGALGWNGMITFGAIY, HFWLATLGIVVYAAVMWVAGI, and LGGLMFLSGALIMAYNVTMTI. Cu cation is bound by residues His-266, His-316, and His-317. 2 residues coordinate heme b: His-404 and His-406.

The protein belongs to the heme-copper respiratory oxidase family. Cu(2+) is required as a cofactor. Heme b serves as cofactor.

Its subcellular location is the cell membrane. It catalyses the reaction 4 Fe(II)-[cytochrome c] + O2 + 8 H(+)(in) = 4 Fe(III)-[cytochrome c] + 2 H2O + 4 H(+)(out). It functions in the pathway energy metabolism; oxidative phosphorylation. Its function is as follows. Cytochrome c oxidase is the component of the respiratory chain that catalyzes the reduction of oxygen to water. Subunits 1-3 form the functional core of the enzyme complex. Co I is the catalytic subunit of the enzyme. Electrons originating in cytochrome c or a quinol are transferred to the bimetallic center formed by a high-spin heme and copper B. This is Cytochrome c oxidase subunit 1 homolog (fixN) from Agrobacterium tumefaciens (strain T37).